The chain runs to 738 residues: Ribosomal RNA large subunit methyltransferase K/L (738 aa).

The 112-residue stretch at threonine 46–leucine 157 folds into the THUMP domain.

Belongs to the methyltransferase superfamily. RlmKL family.

The protein resides in the cytoplasm. It carries out the reaction guanosine(2445) in 23S rRNA + S-adenosyl-L-methionine = N(2)-methylguanosine(2445) in 23S rRNA + S-adenosyl-L-homocysteine + H(+). It catalyses the reaction guanosine(2069) in 23S rRNA + S-adenosyl-L-methionine = N(2)-methylguanosine(2069) in 23S rRNA + S-adenosyl-L-homocysteine + H(+). Functionally, specifically methylates the guanine in position 2445 (m2G2445) and the guanine in position 2069 (m7G2069) of 23S rRNA. This is Ribosomal RNA large subunit methyltransferase K/L from Methylococcus capsulatus (strain ATCC 33009 / NCIMB 11132 / Bath).